A 469-amino-acid chain; its full sequence is Bifunctional protein GlmU (469 aa).

A pyrophosphorylase region spans residues 1–237 (MTTNRKFAIA…SHEVLGVNTR (237 aa)). UDP-N-acetyl-alpha-D-glucosamine is bound by residues 12 to 15 (LAAG), Lys-26, Gln-78, 83 to 84 (GT), 105 to 107 (SGD), Gly-144, Glu-162, Asn-177, and Asn-235. Asp-107 contributes to the Mg(2+) binding site. Residue Asn-235 coordinates Mg(2+). Residues 238-258 (QDLASLDAHLRLQKCQQLMSA) form a linker region. Residues 259-469 (GVSIFKPETC…KKRAEQKKKK (211 aa)) form an N-acetyltransferase region. UDP-N-acetyl-alpha-D-glucosamine is bound by residues Arg-341 and Lys-359. The Proton acceptor role is filled by His-371. Residues Tyr-374 and Asn-385 each contribute to the UDP-N-acetyl-alpha-D-glucosamine site. Acetyl-CoA is bound by residues Ala-388, 394–395 (NY), Ser-413, Ala-431, and Arg-448.

The protein in the N-terminal section; belongs to the N-acetylglucosamine-1-phosphate uridyltransferase family. It in the C-terminal section; belongs to the transferase hexapeptide repeat family. Homotrimer. Mg(2+) is required as a cofactor.

It is found in the cytoplasm. It carries out the reaction alpha-D-glucosamine 1-phosphate + acetyl-CoA = N-acetyl-alpha-D-glucosamine 1-phosphate + CoA + H(+). The catalysed reaction is N-acetyl-alpha-D-glucosamine 1-phosphate + UTP + H(+) = UDP-N-acetyl-alpha-D-glucosamine + diphosphate. Its pathway is nucleotide-sugar biosynthesis; UDP-N-acetyl-alpha-D-glucosamine biosynthesis; N-acetyl-alpha-D-glucosamine 1-phosphate from alpha-D-glucosamine 6-phosphate (route II): step 2/2. It participates in nucleotide-sugar biosynthesis; UDP-N-acetyl-alpha-D-glucosamine biosynthesis; UDP-N-acetyl-alpha-D-glucosamine from N-acetyl-alpha-D-glucosamine 1-phosphate: step 1/1. The protein operates within bacterial outer membrane biogenesis; LPS lipid A biosynthesis. Catalyzes the last two sequential reactions in the de novo biosynthetic pathway for UDP-N-acetylglucosamine (UDP-GlcNAc). The C-terminal domain catalyzes the transfer of acetyl group from acetyl coenzyme A to glucosamine-1-phosphate (GlcN-1-P) to produce N-acetylglucosamine-1-phosphate (GlcNAc-1-P), which is converted into UDP-GlcNAc by the transfer of uridine 5-monophosphate (from uridine 5-triphosphate), a reaction catalyzed by the N-terminal domain. The sequence is that of Bifunctional protein GlmU from Koribacter versatilis (strain Ellin345).